The chain runs to 375 residues: All-trans-retinol dehydrogenase [NAD(+)] ADH1B (375 aa).

An N-acetylserine modification is found at Ser2. A Phosphoserine modification is found at Ser23. Tyr35 is modified (phosphotyrosine). Positions 47, 68, 98, 101, 104, 112, and 175 each coordinate Zn(2+). Residues 200–205 (GLGGVG), Asp224, Lys229, 293–295 (VGV), and Arg370 each bind NAD(+).

It belongs to the zinc-containing alcohol dehydrogenase family. In terms of assembly, dimer of identical or non-identical chains of three types; alpha, beta and gamma. Zn(2+) serves as cofactor.

It localises to the cytoplasm. It catalyses the reaction all-trans-retinol + NAD(+) = all-trans-retinal + NADH + H(+). The enzyme catalyses all-trans-4-hydroxyretinol + NAD(+) = all-trans-4-hydroxyretinal + NADH + H(+). It carries out the reaction all-trans-4-oxoretinol + NAD(+) = all-trans-4-oxoretinal + NADH + H(+). Catalyzes the NAD-dependent oxidation of all-trans-retinol and its derivatives such as all-trans-4-hydroxyretinol and may participate in retinoid metabolism. In vitro can also catalyze the NADH-dependent reduction of all-trans-retinal and its derivatives such as all-trans-4-oxoretinal. Catalyzes in the oxidative direction with higher efficiency. Has the same affinity for all-trans-4-hydroxyretinol and all-trans-4-oxoretinal. This Homo sapiens (Human) protein is All-trans-retinol dehydrogenase [NAD(+)] ADH1B.